Reading from the N-terminus, the 147-residue chain is Receptor activity-modifying protein 3 (147 aa).

Residues 1–22 (MKTPAQRLHLLPLLLLLCGECA) form the signal peptide. Residues 23 to 112 (QVCGCNETGM…CTVDRTHWED (90 aa)) are Extracellular-facing. Asparagine 28, asparagine 57, asparagine 70, and asparagine 102 each carry an N-linked (GlcNAc...) asparagine glycan. 2 cysteine pairs are disulfide-bonded: cysteine 39/cysteine 71 and cysteine 56/cysteine 103. A helical transmembrane segment spans residues 113–137 (PPDEVLIPLIAVPVVLTVAMAGLVV). Over 138-147 (WRSKHTDRLL) the chain is Cytoplasmic.

Belongs to the RAMP family. Heterodimer of CALCRL and RAMP3; interaction induces allosteric modulation of CALCRL function and ligand specificity for adrenomedullin/ADM and intermedin/ADM2. Heterodimer of CALCR and RAMP3; interaction form the receptor complex AMYR3 for amylin/IAPP. Interacts with GPER1. As to expression, expressed predominantly in the testis, embryonic and adult brain and in kidney.

Its subcellular location is the cell membrane. It localises to the membrane. Its function is as follows. Accessory protein that interacts with and modulates the function of G-protein coupled receptors including calcitonin gene-related peptide type 1 receptor (CALCRL), calcitonin receptor (CALCR) and G-protein coupled estrogen receptor 1 (GPER1). Required for the transport of CALCRL and GPER1 receptors to the plasma membrane. Plays a role in cardioprotection by reducing cardiac hypertrophy and perivascular fibrosis in a GPER1-dependent manner. Together with CALCRL, form a receptor complex for adrenomedullin/ADM and intermedin/ADM2. Together with CALCR, act as a receptor complex for amylin/IAPP. The chain is Receptor activity-modifying protein 3 from Mus musculus (Mouse).